The sequence spans 352 residues: Protein Wnt-3a (352 aa).

Positions 1–18 (MAPLGYFLLLCSLKQALG) are cleaved as a signal peptide. 11 disulfides stabilise this stretch: C77–C88, C128–C136, C138–C155, C203–C217, C205–C212, C281–C312, C297–C307, C311–C351, C327–C342, C329–C339, and C334–C335. N87 carries N-linked (GlcNAc...) asparagine glycosylation. Residue S209 is the site of O-palmitoleoyl serine; by PORCN attachment. N-linked (GlcNAc...) asparagine glycosylation occurs at N298.

This sequence belongs to the Wnt family. As to quaternary structure, forms a soluble 1:1 complex with AFM; this prevents oligomerization and is required for prolonged biological activity. The complex with AFM may represent the physiological form in body fluids. Homooligomer; disulfide-linked, leading to inactivation. Interacts with PORCN. Interacts with APCDD1 and WLS. Component of the Wnt-Fzd-LRP5-LRP6 signaling complex that contains a WNT protein, a FZD protein and LRP5 or LRP6. Interacts directly in the complex with LRP6. Interacts with glypican GPC3. Interacts with PKD1 (via extracellular domain). Interacts with FZD5. Post-translationally, palmitoleoylation by PORCN is required for efficient binding to frizzled receptors. Palmitoleoylation is required for proper trafficking to cell surface, vacuolar acidification is critical to release palmitoleoylated WNT3A from WLS in secretory vesicles. Depalmitoleoylated by NOTUM, leading to inhibit Wnt signaling pathway, possibly by promoting disulfide bond formation and oligomerization. Proteolytic processing by TIKI1 and TIKI2 promotes oxidation and formation of large disulfide-bond oligomers, leading to inactivation of WNT3A. In terms of processing, disulfide bonds have critical and distinct roles in secretion and activity. Loss of each conserved cysteine in WNT3A results in high molecular weight oxidized Wnt oligomers, which are formed through inter-Wnt disulfide bonding. As to expression, moderately expressed in placenta and at low levels in adult lung, spleen, and prostate.

Its subcellular location is the secreted. The protein localises to the extracellular space. It localises to the extracellular matrix. Functionally, ligand for members of the frizzled family of seven transmembrane receptors. Functions in the canonical Wnt signaling pathway that results in activation of transcription factors of the TCF/LEF family. Required for normal embryonic mesoderm development and formation of caudal somites. Required for normal morphogenesis of the developing neural tube. Mediates self-renewal of the stem cells at the bottom on intestinal crypts (in vitro). The polypeptide is Protein Wnt-3a (WNT3A) (Homo sapiens (Human)).